The chain runs to 422 residues: Enolase (422 aa).

(2R)-2-phosphoglycerate is bound at residue Q162. E204 functions as the Proton donor in the catalytic mechanism. Residues D241, E284, and D311 each coordinate Mg(2+). Positions 336, 365, 366, and 387 each coordinate (2R)-2-phosphoglycerate. Catalysis depends on K336, which acts as the Proton acceptor.

Belongs to the enolase family. In terms of assembly, component of the RNA degradosome, a multiprotein complex involved in RNA processing and mRNA degradation. Mg(2+) serves as cofactor.

It is found in the cytoplasm. It localises to the secreted. The protein resides in the cell surface. It catalyses the reaction (2R)-2-phosphoglycerate = phosphoenolpyruvate + H2O. Its pathway is carbohydrate degradation; glycolysis; pyruvate from D-glyceraldehyde 3-phosphate: step 4/5. In terms of biological role, catalyzes the reversible conversion of 2-phosphoglycerate (2-PG) into phosphoenolpyruvate (PEP). It is essential for the degradation of carbohydrates via glycolysis. The polypeptide is Enolase (Legionella pneumophila (strain Paris)).